A 31-amino-acid chain; its full sequence is Cytochrome b6-f complex subunit 6 (31 aa).

A helical membrane pass occupies residues Val-4–Val-24.

This sequence belongs to the PetL family. As to quaternary structure, the 4 large subunits of the cytochrome b6-f complex are cytochrome b6, subunit IV (17 kDa polypeptide, PetD), cytochrome f and the Rieske protein, while the 4 small subunits are PetG, PetL, PetM and PetN. The complex functions as a dimer.

It localises to the plastid. Its subcellular location is the chloroplast thylakoid membrane. Component of the cytochrome b6-f complex, which mediates electron transfer between photosystem II (PSII) and photosystem I (PSI), cyclic electron flow around PSI, and state transitions. PetL is important for photoautotrophic growth as well as for electron transfer efficiency and stability of the cytochrome b6-f complex. This is Cytochrome b6-f complex subunit 6 from Mesostigma viride (Green alga).